Reading from the N-terminus, the 536-residue chain is Protein GvpD1 (536 aa).

An ATP-binding site is contributed by Gly39 to Thr46. A disordered region spans residues Gly352–Asp413. The segment covering Pro363–Met372 has biased composition (polar residues). Low complexity predominate over residues Ala373 to Thr385. Basic and acidic residues predominate over residues His386–Arg396.

It belongs to the gas vesicle GvpD family. In terms of assembly, interacts with GvpE.

The protein resides in the cytoplasm. Its function is as follows. Causes a decrease in the amount of GvpE protein. The 5'-region of its promoter or mRNA has a repressive function on downstream genes. Gas vesicles are hollow, gas filled proteinaceous nanostructures found in several microbial planktonic microorganisms. They allow positioning of halobacteria at the optimal depth for growth in the poorly aerated, shallow brine pools of their habitat. Functionally, expression of a 9.5 kb p-vac DNA fragment containing 2 divergently transcribed regions (gvpD-gvpE-gvpF-gvpG-gvpH-gvpI-gvpJ-gvpK-gvpL-gvpM and gvpA-gvpC-gvpN-gvpO) allows H.volcanii to produce gas vesicles. A similar region restores gas vesicle production in H.halobium without the p-vac locus, but it still has the c-vac locus. This is Protein GvpD1 (gvpD11) from Halobacterium salinarum (strain ATCC 700922 / JCM 11081 / NRC-1) (Halobacterium halobium).